A 498-amino-acid chain; its full sequence is Cytochrome P450 monooxygenase 71 (498 aa).

The helical transmembrane segment at 7 to 24 (YVFALLGILATLYFVRWS) threads the bilayer. N-linked (GlcNAc...) asparagine glycosylation occurs at N425. C440 is a binding site for heme.

This sequence belongs to the cytochrome P450 family. It depends on heme as a cofactor.

The protein localises to the membrane. Its pathway is secondary metabolite biosynthesis. Its function is as follows. Cytochrome P450 monooxygenase that is able to use dehydroabietic acid and testosterone as substrates for oxidation, suggesting that the natural substrate(s) may be structurally related to steroid compounds. The sequence is that of Cytochrome P450 monooxygenase 71 from Postia placenta (strain ATCC 44394 / Madison 698-R) (Brown rot fungus).